Reading from the N-terminus, the 1016-residue chain is DENN domain-containing protein 1A (1016 aa).

Residues 13-145 (FEVYVEVAYP…HRLPIPDPGV (133 aa)) enclose the uDENN domain. The cDENN domain maps to 162 to 298 (ELPSIPENRN…VISSLKNRLK (137 aa)). The region spanning 300 to 378 (VSTTTGDGVA…DGRLDLLNSG (79 aa)) is the dDENN domain. The FXDXF motif motif lies at 381-385 (FSDVF). A disordered region spans residues 453 to 565 (DITENGCVSS…GPTPAPPDRA (113 aa)). Ser473 bears the Phosphoserine mark. Residues 479–489 (QDPRLREDRRP) show a composition bias toward basic and acidic residues. Residues 500-509 (PRPHVVRRPK) show a composition bias toward basic residues. Phosphothreonine is present on Thr519. A phosphoserine mark is found at Ser520, Ser522, Ser523, Ser536, Ser538, and Ser546. Positions 569–578 (DLLEDVFSSL) match the Clathrin box motif. Ser592 bears the Phosphoserine mark. Positions 681 to 737 (LSPSIKEETPIPTPGSITIPRPQGRKTPELGIVPPPPTARPAKLQAAGGPLGDFSSE) are disordered. Ser750 is modified (phosphoserine). Arg760 is subject to Omega-N-methylarginine. 2 disordered regions span residues 763–783 (PQGP…AGTG) and 935–1016 (SARA…ETFE). The span at 954 to 970 (LLPPRPPQSLQPTPQPS) shows a compositional bias: pro residues. Composition is skewed to basic and acidic residues over residues 977–988 (DPFEDLLRKTKQ) and 1007–1016 (QLRRQWETFE).

As to quaternary structure, interacts with RAB35. Interacts with clathrin and with the adapter protein complex 2, AP-2. Interacts with ITSN1 and SH3GL2. Interacts (when phosphorylated) with YWHAE. Post-translationally, phosphorylated on serine and/or threonine in an Akt-dependent manner. Phosphorylation probably regulates the guanine nucleotide exchange factor (GEF) activity, possibly by disrupting an intramolecular interaction between the DENN domain and the C-terminus of the protein, thereby relieving the autoinhibition.

It is found in the cytoplasmic vesicle. Its subcellular location is the clathrin-coated vesicle membrane. The protein resides in the presynaptic cell membrane. The guanine nucleotide exchange factor (GEF) activity is autoinhibited. Autoinhibition may be the result of intramolecular interaction between the DENN domain and the C-terminus, which is disrupted upon phosphorylation. Activation is regulated by Akt activation. In terms of biological role, guanine nucleotide exchange factor (GEF) regulating clathrin-mediated endocytosis through RAB35 activation. Promotes the exchange of GDP to GTP, converting inactive GDP-bound RAB35 into its active GTP-bound form. Regulates clathrin-mediated endocytosis of synaptic vesicles and mediates exit from early endosomes. Binds phosphatidylinositol-phosphates (PtdInsPs), with some preference for PtdIns(3)P. The sequence is that of DENN domain-containing protein 1A (Dennd1a) from Mus musculus (Mouse).